The following is a 191-amino-acid chain: Nucleoside triphosphate pyrophosphatase (191 aa).

The Proton acceptor role is filled by aspartate 70.

Belongs to the Maf family. The cofactor is a divalent metal cation.

The protein localises to the cytoplasm. It catalyses the reaction a ribonucleoside 5'-triphosphate + H2O = a ribonucleoside 5'-phosphate + diphosphate + H(+). The catalysed reaction is a 2'-deoxyribonucleoside 5'-triphosphate + H2O = a 2'-deoxyribonucleoside 5'-phosphate + diphosphate + H(+). In terms of biological role, nucleoside triphosphate pyrophosphatase. May have a dual role in cell division arrest and in preventing the incorporation of modified nucleotides into cellular nucleic acids. In Synechococcus sp. (strain WH7803), this protein is Nucleoside triphosphate pyrophosphatase.